We begin with the raw amino-acid sequence, 291 residues long: ATP phosphoribosyltransferase (291 aa).

Belongs to the ATP phosphoribosyltransferase family. Long subfamily. It depends on Mg(2+) as a cofactor.

The protein resides in the cytoplasm. The catalysed reaction is 1-(5-phospho-beta-D-ribosyl)-ATP + diphosphate = 5-phospho-alpha-D-ribose 1-diphosphate + ATP. The protein operates within amino-acid biosynthesis; L-histidine biosynthesis; L-histidine from 5-phospho-alpha-D-ribose 1-diphosphate: step 1/9. With respect to regulation, feedback inhibited by histidine. Functionally, catalyzes the condensation of ATP and 5-phosphoribose 1-diphosphate to form N'-(5'-phosphoribosyl)-ATP (PR-ATP). Has a crucial role in the pathway because the rate of histidine biosynthesis seems to be controlled primarily by regulation of HisG enzymatic activity. The sequence is that of ATP phosphoribosyltransferase from Geotalea uraniireducens (strain Rf4) (Geobacter uraniireducens).